A 677-amino-acid chain; its full sequence is Secretogranin-1 (677 aa).

Residues 1–20 (MQPAMLLGLLGAAALAAVSS) form the signal peptide. Cysteines 36 and 57 form a disulfide. Disordered stretches follow at residues 63 to 505 (KSGK…RQYE) and 531 to 558 (NSDFEKRGNPDDSFLEDEGEDRNGVTLT). Positions 64–90 (SGKEVKGEEKGENQNSKFEVRLLRDPA) are enriched in basic and acidic residues. Residues S93, S99, and S100 each carry the phosphoserine modification. S93 carries O-linked (Xyl...) (chondroitin sulfate) serine glycosylation. The O-linked (GalNAc...) threonine glycan is linked to T115. The span at 118-133 (GNEKWTEGGGHSREGV) shows a compositional bias: basic and acidic residues. S129, S147, S190, and S220 each carry phosphoserine. 2 stretches are compositionally biased toward basic and acidic residues: residues 148–192 (KEAK…DSGE) and 200–249 (KRSE…KPQE). The O-linked (Xyl...) (chondroitin sulfate) serine glycan is linked to S237. Positions 251 to 280 (TDQDQSQEESQEGEEGEEGEEGEEGEEDSA) are enriched in acidic residues. Residues S256, S260, S300, S301, S318, and S342 each carry the phosphoserine modification. Residues 306–322 (PLSEERRPSPKESKEAD) are compositionally biased toward basic and acidic residues. Residue Y348 is modified to Sulfotyrosine. Composition is skewed to basic and acidic residues over residues 363 to 409 (RGSE…ERSY) and 421 to 455 (GREPGAHSALDTREEKRLLDEGHYPVRESPIDTAK). S365, S375, and S378 each carry phosphoserine. Y472 is modified (sulfotyrosine). A compositionally biased stretch (basic and acidic residues) spans 491 to 504 (EESREEVRFPDRQY). Phosphoserine is present on residues S493, S532, and S543. Residues Y566 and Y624 each carry the sulfotyrosine modification. Residues 622 to 646 (DFYDSEEQMGPHQEANDEKARADQR) are disordered. The residue at position 626 (S626) is a Phosphoserine. Residues 635–646 (EANDEKARADQR) are compositionally biased toward basic and acidic residues.

Belongs to the chromogranin/secretogranin protein family. Interacts with ITPR1 in the secretory granules.

Its subcellular location is the secreted. Its function is as follows. Secretogranin-1 is a neuroendocrine secretory granule protein, which may be the precursor for other biologically active peptides. The protein is Secretogranin-1 (Chgb) of Mus musculus (Mouse).